The primary structure comprises 98 residues: Peptide YY (98 aa).

A signal peptide spans 1-28 (MVAVRRPWPVMVAMLLVLLACLGALVDA). Residue S41 is modified to Phosphoserine. The residue at position 64 (Y64) is a Tyrosine amide. Positions 68 to 98 (EVPAALFSKLLFTDDSENLPFRSRPEGVDQW) are excised as a propeptide.

This sequence belongs to the NPY family. In terms of processing, the peptide YY form is cleaved at Pro-30 by the prolyl endopeptidase FAP (seprase) activity (in vitro) to generate peptide YY(3-36).

It localises to the secreted. Its function is as follows. This gut peptide inhibits exocrine pancreatic secretion, has a vasoconstrictory action and inhibitis jejunal and colonic mobility. This is Peptide YY (Pyy) from Rattus norvegicus (Rat).